The primary structure comprises 357 residues: Protein-glutamate methylesterase/protein-glutamine glutaminase 1 (357 aa).

A Response regulatory domain is found at 7-125 (RAVIIDDSLL…QFDPEEIGNI (119 aa)). Position 58 is a 4-aspartylphosphate (Asp58). A CheB-type methylesterase domain is found at 162 to 344 (KKSPIQAICI…VEYIEPVTEI (183 aa)). Active-site residues include Ser174, His201, and Asp297.

Belongs to the CheB family. Post-translationally, phosphorylated by CheA. Phosphorylation of the N-terminal regulatory domain activates the methylesterase activity.

Its subcellular location is the cytoplasm. The catalysed reaction is [protein]-L-glutamate 5-O-methyl ester + H2O = L-glutamyl-[protein] + methanol + H(+). It catalyses the reaction L-glutaminyl-[protein] + H2O = L-glutamyl-[protein] + NH4(+). In terms of biological role, involved in chemotaxis. Part of a chemotaxis signal transduction system that modulates chemotaxis in response to various stimuli. Catalyzes the demethylation of specific methylglutamate residues introduced into the chemoreceptors (methyl-accepting chemotaxis proteins or MCP) by CheR. Also mediates the irreversible deamidation of specific glutamine residues to glutamic acid. This chain is Protein-glutamate methylesterase/protein-glutamine glutaminase 1, found in Leptospira interrogans serogroup Icterohaemorrhagiae serovar Lai (strain 56601).